Consider the following 123-residue polypeptide: MAKIKARDLRGKKKEELLKQLDDLKNELSQLRVAKVTGGAASKLSKIRVVRKSIARVLTVITQTQKENLRKFYKGKKYKPLDLRPKKTRALRRRLNKHEESLRTKKQQRKDLLYSIRKFAVKA.

It belongs to the universal ribosomal protein uL29 family. As to quaternary structure, component of the large ribosomal subunit.

It localises to the cytoplasm. Functionally, component of the large ribosomal subunit. The ribosome is a large ribonucleoprotein complex responsible for the synthesis of proteins in the cell. This is Large ribosomal subunit protein uL29 (rpl35) from Hippocampus comes (Tiger tail seahorse).